Consider the following 91-residue polypeptide: DNA-binding protein HU (91 aa).

This sequence belongs to the bacterial histone-like protein family. Homodimer.

Its function is as follows. Histone-like DNA-binding protein which is capable of wrapping DNA to stabilize it, and thus to prevent its denaturation under extreme environmental conditions. This is DNA-binding protein HU (hup) from Streptococcus thermophilus.